The sequence spans 403 residues: Arginine biosynthesis bifunctional protein ArgJ (403 aa).

Residues 1–11 are compositionally biased toward polar residues; it reads MVQSVLSSTSH. Residues 1-21 are disordered; that stretch reads MVQSVLSSTSHGSERADMSAA. Positions 161, 183, 194, 273, 398, and 403 each coordinate substrate. The active-site Nucleophile is threonine 194.

It belongs to the ArgJ family. As to quaternary structure, heterotetramer of two alpha and two beta chains.

Its subcellular location is the cytoplasm. It catalyses the reaction N(2)-acetyl-L-ornithine + L-glutamate = N-acetyl-L-glutamate + L-ornithine. It carries out the reaction L-glutamate + acetyl-CoA = N-acetyl-L-glutamate + CoA + H(+). Its pathway is amino-acid biosynthesis; L-arginine biosynthesis; L-ornithine and N-acetyl-L-glutamate from L-glutamate and N(2)-acetyl-L-ornithine (cyclic): step 1/1. It functions in the pathway amino-acid biosynthesis; L-arginine biosynthesis; N(2)-acetyl-L-ornithine from L-glutamate: step 1/4. Its function is as follows. Catalyzes two activities which are involved in the cyclic version of arginine biosynthesis: the synthesis of N-acetylglutamate from glutamate and acetyl-CoA as the acetyl donor, and of ornithine by transacetylation between N(2)-acetylornithine and glutamate. This is Arginine biosynthesis bifunctional protein ArgJ from Rhodococcoides fascians (Rhodococcus fascians).